Here is a 397-residue protein sequence, read N- to C-terminus: 1-deoxy-D-xylulose 5-phosphate reductoisomerase (397 aa).

S10, G11, S12, I13, A36, R37, and N124 together coordinate NADPH. K125 is a 1-deoxy-D-xylulose 5-phosphate binding site. Residue E126 participates in NADPH binding. Mn(2+) is bound at residue D150. S151, E152, S186, and H209 together coordinate 1-deoxy-D-xylulose 5-phosphate. Residue E152 coordinates Mn(2+). G215 serves as a coordination point for NADPH. Residues S222, N227, K228, and E231 each contribute to the 1-deoxy-D-xylulose 5-phosphate site. Residue E231 coordinates Mn(2+).

It belongs to the DXR family. Mg(2+) is required as a cofactor. The cofactor is Mn(2+).

The catalysed reaction is 2-C-methyl-D-erythritol 4-phosphate + NADP(+) = 1-deoxy-D-xylulose 5-phosphate + NADPH + H(+). The protein operates within isoprenoid biosynthesis; isopentenyl diphosphate biosynthesis via DXP pathway; isopentenyl diphosphate from 1-deoxy-D-xylulose 5-phosphate: step 1/6. Catalyzes the NADPH-dependent rearrangement and reduction of 1-deoxy-D-xylulose-5-phosphate (DXP) to 2-C-methyl-D-erythritol 4-phosphate (MEP). The chain is 1-deoxy-D-xylulose 5-phosphate reductoisomerase from Aeromonas salmonicida (strain A449).